The primary structure comprises 911 residues: DNA ligase 4 (911 aa).

12 residues coordinate ATP: E271, T272, K273, L274, R278, E331, K345, F367, E427, K432, K449, and K451. The active-site N6-AMP-lysine intermediate is the K273. Residue E331 participates in Mg(2+) binding. Residue E427 coordinates Mg(2+). Positions L610 to D620 are required for catalytic activity. BRCT domains lie at K654–M743 and S808–L911.

Belongs to the ATP-dependent DNA ligase family. As to quaternary structure, interacts with XRCC4; the LIG4-XRCC4 subcomplex has a 1:2 stoichiometry and XRCC4 is required for LIG4 stability. Component of the core long-range non-homologous end joining (NHEJ) complex (also named DNA-PK complex) composed of PRKDC, LIG4, XRCC4, XRCC6/Ku70, XRCC5/Ku86 and NHEJ1/XLF. Additional component of the NHEJ complex includes PAXX. Following autophosphorylation, PRKDC dissociates from DNA, leading to formation of the short-range NHEJ complex, composed of LIG4, XRCC4, XRCC6/Ku70, XRCC5/Ku86 and NHEJ1/XLF. Interacts with DCLRE1C; the interaction is direct. Interacts with APLF. Mg(2+) is required as a cofactor.

The protein localises to the nucleus. The enzyme catalyses ATP + (deoxyribonucleotide)n-3'-hydroxyl + 5'-phospho-(deoxyribonucleotide)m = (deoxyribonucleotide)n+m + AMP + diphosphate.. DNA ligase involved in DNA non-homologous end joining (NHEJ); required for double-strand break (DSB) repair and V(D)J recombination. Catalyzes the NHEJ ligation step of the broken DNA during DSB repair by resealing the DNA breaks after the gap filling is completed. Joins single-strand breaks in a double-stranded polydeoxynucleotide in an ATP-dependent reaction. LIG4 is mechanistically flexible: it can ligate nicks as well as compatible DNA overhangs alone, while in the presence of XRCC4, it can ligate ends with 2-nucleotides (nt) microhomology and 1-nt gaps. Forms a subcomplex with XRCC4; the LIG4-XRCC4 subcomplex is responsible for the NHEJ ligation step and XRCC4 enhances the joining activity of LIG4. Binding of the LIG4-XRCC4 complex to DNA ends is dependent on the assembly of the DNA-dependent protein kinase complex DNA-PK to these DNA ends. LIG4 regulates nuclear localization of XRCC4. The polypeptide is DNA ligase 4 (Mus musculus (Mouse)).